The primary structure comprises 150 residues: Small ribosomal subunit protein uS15 (150 aa).

The tract at residues 1-22 (MNKRREKGQSHSTRPPHPQPPQ) is disordered.

This sequence belongs to the universal ribosomal protein uS15 family. In terms of assembly, part of the 30S ribosomal subunit.

This Aeropyrum pernix (strain ATCC 700893 / DSM 11879 / JCM 9820 / NBRC 100138 / K1) protein is Small ribosomal subunit protein uS15.